We begin with the raw amino-acid sequence, 230 residues long: Large ribosomal subunit protein uL1 (230 aa).

Belongs to the universal ribosomal protein uL1 family. In terms of assembly, part of the 50S ribosomal subunit.

Binds directly to 23S rRNA. The L1 stalk is quite mobile in the ribosome, and is involved in E site tRNA release. Functionally, protein L1 is also a translational repressor protein, it controls the translation of the L11 operon by binding to its mRNA. This Thermoanaerobacter sp. (strain X514) protein is Large ribosomal subunit protein uL1.